A 421-amino-acid chain; its full sequence is Enolase (421 aa).

A (2R)-2-phosphoglycerate-binding site is contributed by Gln162. Glu204 functions as the Proton donor in the catalytic mechanism. Residues Asp241, Glu284, and Asp311 each coordinate Mg(2+). (2R)-2-phosphoglycerate-binding residues include Lys336, Arg365, Ser366, and Lys387. Residue Lys336 is the Proton acceptor of the active site.

This sequence belongs to the enolase family. Mg(2+) is required as a cofactor.

It is found in the cytoplasm. The protein localises to the secreted. The protein resides in the cell surface. It catalyses the reaction (2R)-2-phosphoglycerate = phosphoenolpyruvate + H2O. It functions in the pathway carbohydrate degradation; glycolysis; pyruvate from D-glyceraldehyde 3-phosphate: step 4/5. Catalyzes the reversible conversion of 2-phosphoglycerate (2-PG) into phosphoenolpyruvate (PEP). It is essential for the degradation of carbohydrates via glycolysis. The protein is Enolase of Nitratiruptor sp. (strain SB155-2).